The primary structure comprises 173 residues: MVDSYDDAFDGEKSKTQIKRELHALVELGERLTTLKADTLARLPLTDELRKALDEASRHTAHGARKRHMSFVGKLMRVQDLDAIHAVLEQIDSSSRQYNERFHGLERWRDRLIDGNDEDLERFVNEFPDTDRQHLRSLIRHAQHEKARNKPPAAARKVFKYIRDLDETQRGLR.

Belongs to the DarP family.

It is found in the cytoplasm. Member of a network of 50S ribosomal subunit biogenesis factors which assembles along the 30S-50S interface, preventing incorrect 23S rRNA structures from forming. Promotes peptidyl transferase center (PTC) maturation. The sequence is that of Dual-action ribosomal maturation protein DarP from Pseudomonas entomophila (strain L48).